Reading from the N-terminus, the 278-residue chain is Small ribosomal subunit protein uS2 (278 aa).

Residues 235 to 278 (QRRKDHGEGGQQAAGGGRGQRDEINVYQGGRGGRGGGPRQQQAS) form a disordered region. Composition is skewed to gly residues over residues 243–252 (GGQQAAGGGR) and 263–272 (GGRGGRGGGP).

The protein belongs to the universal ribosomal protein uS2 family.

The polypeptide is Small ribosomal subunit protein uS2 (Sorangium cellulosum (strain So ce56) (Polyangium cellulosum (strain So ce56))).